A 394-amino-acid chain; its full sequence is Flap endonuclease 1 (394 aa).

The tract at residues 1-104 (MGIKQLFTII…GELARRYQRK (104 aa)) is N-domain. D34 serves as a coordination point for Mg(2+). Residues R47 and R70 each contribute to the DNA site. Residues D86, E158, E160, D179, and D181 each coordinate Mg(2+). Residues 122–253 (DVEKFSRRTV…STALKLIREH (132 aa)) are I-domain. E158 provides a ligand contact to DNA. Residues G231 and D233 each contribute to the DNA site. Residue D233 coordinates Mg(2+). The segment at 340-348 (QQQRLEGFF) is interaction with PCNA. Residues 358–394 (QKAHKRKLEVKAEEAKKKLKAEKKEKAKAKARPRGTA) are disordered. The segment covering 374–394 (KKLKAEKKEKAKAKARPRGTA) has biased composition (basic residues).

Belongs to the XPG/RAD2 endonuclease family. FEN1 subfamily. Interacts with PCNA. Three molecules of FEN1 bind to one PCNA trimer with each molecule binding to one PCNA monomer. PCNA stimulates the nuclease activity without altering cleavage specificity. Mg(2+) serves as cofactor. Phosphorylated. Phosphorylation upon DNA damage induces relocalization to the nuclear plasma.

It is found in the nucleus. Its subcellular location is the nucleolus. The protein localises to the nucleoplasm. It localises to the mitochondrion. Its function is as follows. Structure-specific nuclease with 5'-flap endonuclease and 5'-3' exonuclease activities involved in DNA replication and repair. During DNA replication, cleaves the 5'-overhanging flap structure that is generated by displacement synthesis when DNA polymerase encounters the 5'-end of a downstream Okazaki fragment. It enters the flap from the 5'-end and then tracks to cleave the flap base, leaving a nick for ligation. Also involved in the long patch base excision repair (LP-BER) pathway, by cleaving within the apurinic/apyrimidinic (AP) site-terminated flap. Acts as a genome stabilization factor that prevents flaps from equilibrating into structures that lead to duplications and deletions. Also possesses 5'-3' exonuclease activity on nicked or gapped double-stranded DNA, and exhibits RNase H activity. Also involved in replication and repair of rDNA and in repairing mitochondrial DNA. The sequence is that of Flap endonuclease 1 from Pyricularia oryzae (strain 70-15 / ATCC MYA-4617 / FGSC 8958) (Rice blast fungus).